Reading from the N-terminus, the 324-residue chain is Phospho-N-acetylmuramoyl-pentapeptide-transferase (324 aa).

The next 10 membrane-spanning stretches (helical) occupy residues 9-29 (TFAV…PFLV), 53-73 (TMGA…FSFI), 77-97 (VSAA…LGFL), 117-137 (FLGQ…SDFA), 149-169 (IDLG…FSNA), 176-196 (LDGL…VIAF), 201-221 (MDVA…LLFN), 227-247 (IFMG…VSIL), 253-273 (LLLL…LQVF), and 304-324 (VLTF…VVIF).

It belongs to the glycosyltransferase 4 family. MraY subfamily. The cofactor is Mg(2+).

It localises to the cell membrane. It carries out the reaction UDP-N-acetyl-alpha-D-muramoyl-L-alanyl-gamma-D-glutamyl-meso-2,6-diaminopimeloyl-D-alanyl-D-alanine + di-trans,octa-cis-undecaprenyl phosphate = di-trans,octa-cis-undecaprenyl diphospho-N-acetyl-alpha-D-muramoyl-L-alanyl-D-glutamyl-meso-2,6-diaminopimeloyl-D-alanyl-D-alanine + UMP. Its pathway is cell wall biogenesis; peptidoglycan biosynthesis. Catalyzes the initial step of the lipid cycle reactions in the biosynthesis of the cell wall peptidoglycan: transfers peptidoglycan precursor phospho-MurNAc-pentapeptide from UDP-MurNAc-pentapeptide onto the lipid carrier undecaprenyl phosphate, yielding undecaprenyl-pyrophosphoryl-MurNAc-pentapeptide, known as lipid I. The polypeptide is Phospho-N-acetylmuramoyl-pentapeptide-transferase (Listeria innocua serovar 6a (strain ATCC BAA-680 / CLIP 11262)).